A 356-amino-acid polypeptide reads, in one-letter code: S-adenosylmethionine:tRNA ribosyltransferase-isomerase (356 aa).

This sequence belongs to the QueA family. As to quaternary structure, monomer.

It is found in the cytoplasm. It catalyses the reaction 7-aminomethyl-7-carbaguanosine(34) in tRNA + S-adenosyl-L-methionine = epoxyqueuosine(34) in tRNA + adenine + L-methionine + 2 H(+). Its pathway is tRNA modification; tRNA-queuosine biosynthesis. Functionally, transfers and isomerizes the ribose moiety from AdoMet to the 7-aminomethyl group of 7-deazaguanine (preQ1-tRNA) to give epoxyqueuosine (oQ-tRNA). This chain is S-adenosylmethionine:tRNA ribosyltransferase-isomerase, found in Xanthomonas axonopodis pv. citri (strain 306).